We begin with the raw amino-acid sequence, 86 residues long: Conotoxin Ec15a (86 aa).

A signal peptide spans 1-23 (MEKLTILILVATVLLAIQVLGQG). A propeptide spanning residues 24 to 49 (EGEKPPKEWVQQYAAKRLWALMKGPR) is cleaved from the precursor. The residue at position 50 (Gln50) is a Pyrrolidone carboxylic acid.

This sequence belongs to the conotoxin O2 superfamily. Contains 4 disulfide bonds. Expressed by the venom duct.

The protein resides in the secreted. The protein is Conotoxin Ec15a of Conus emaciatus (False virgin cone).